A 108-amino-acid polypeptide reads, in one-letter code: uncharacterized protein (108 aa).

The tract at residues 74–108 is disordered; that stretch reads TGSKKRDSKANSRSRPSGTITSRGARIGLQGYKSH. Over residues 84–95 the composition is skewed to polar residues; that stretch reads NSRSRPSGTITS.

This is an uncharacterized protein from Saccharomyces cerevisiae (strain ATCC 204508 / S288c) (Baker's yeast).